The primary structure comprises 641 residues: Probable potassium transport system protein Kup 4 (641 aa).

12 helical membrane passes run 31-51 (AALG…LYTL), 64-84 (TASA…TISI), 119-139 (ILAV…VITP), 155-175 (GSLK…FFAA), 183-203 (IGAA…VLGL), 221-241 (AIGF…GVFL), 265-285 (WYAI…ALLI), 298-318 (LCPT…TIIA), 355-375 (IYVP…TIAF), 381-401 (LAGA…CLLF), 412-432 (LAVS…FFGA), and 437-457 (IAEG…LMLT).

It belongs to the HAK/KUP transporter (TC 2.A.72) family.

It is found in the cell inner membrane. The enzyme catalyses K(+)(in) + H(+)(in) = K(+)(out) + H(+)(out). Transport of potassium into the cell. Likely operates as a K(+):H(+) symporter. In Bradyrhizobium sp. (strain BTAi1 / ATCC BAA-1182), this protein is Probable potassium transport system protein Kup 4.